Consider the following 698-residue polypeptide: Elongation factor G (698 aa).

Residues 8–290 (ERYRNIGIAA…AVIEFLPAPN (283 aa)) form the tr-type G domain. Residues 17–24 (AHIDAGKT), 88–92 (DTPGH), and 142–145 (NKMD) each bind GTP.

The protein belongs to the TRAFAC class translation factor GTPase superfamily. Classic translation factor GTPase family. EF-G/EF-2 subfamily.

Its subcellular location is the cytoplasm. In terms of biological role, catalyzes the GTP-dependent ribosomal translocation step during translation elongation. During this step, the ribosome changes from the pre-translocational (PRE) to the post-translocational (POST) state as the newly formed A-site-bound peptidyl-tRNA and P-site-bound deacylated tRNA move to the P and E sites, respectively. Catalyzes the coordinated movement of the two tRNA molecules, the mRNA and conformational changes in the ribosome. The protein is Elongation factor G of Halorhodospira halophila (strain DSM 244 / SL1) (Ectothiorhodospira halophila (strain DSM 244 / SL1)).